The sequence spans 368 residues: 2-oxoglutarate-dependent dioxygenase frbJ (368 aa).

Residues 171–277 form the Fe2OG dioxygenase domain; the sequence is QQHKLKIVKY…RYSIPFFQGV (107 aa). The Fe cation site is built by histidine 198, aspartate 200, and histidine 256. Arginine 268 is a 2-oxoglutarate binding site.

Belongs to the iron/ascorbate-dependent oxidoreductase family.

It functions in the pathway antifungal biosynthesis. In terms of biological role, 2-oxoglutarate-dependent dioxygenase; part of the gene cluster that mediates the biosynthesis of the antifungal antibiotic FR901469, an inhibitor of beta-1,3-glucansynthase, exerting antifungal activity against the pathogenes Candida albicans and Aspergillus fumigatus. FR901469 is a cyclic depsipeptide containing 12 amino acid residues and a fatty acid chain. The NRPS frbI contains 12 modules responsible for the formation of the depsipeptide backbone which is denoted as Acyl-Thr-Ala-Tyr-Val-4OHPro-Thr-Thr-3OHPro-threo3OHGln-Gly-Thr-Orn-OH (C71H116N14O23). The PKS frbB is probably involved in the production of the hydrocarbon chain, and the acyl-CoA ligase frbC might be involved in the transport of the chain to the peptide ptoduct of frbI. Because FR901469 contains 3 hydroxylated amino acid residues, the 3 oxygenases frbA, frbH, and frbJ might be participating in amino acid hydroxylation. As no thioesterase domains were detected in frbI or frbB, the thioesterases frbD and frbE may instead release and cyclize the products of the NRPS and PKS, respectively. In Dothideomycetidae sp. (strain 11243) (Fungal sp. (strain No.11243)), this protein is 2-oxoglutarate-dependent dioxygenase frbJ.